Consider the following 177-residue polypeptide: Large ribosomal subunit protein uL6 (177 aa).

Belongs to the universal ribosomal protein uL6 family. Part of the 50S ribosomal subunit.

Its function is as follows. This protein binds to the 23S rRNA, and is important in its secondary structure. It is located near the subunit interface in the base of the L7/L12 stalk, and near the tRNA binding site of the peptidyltransferase center. This Ruegeria pomeroyi (strain ATCC 700808 / DSM 15171 / DSS-3) (Silicibacter pomeroyi) protein is Large ribosomal subunit protein uL6.